The following is a 103-amino-acid chain: Protein Rev (103 aa).

Serine 5 is modified (phosphoserine; by host CK2). A homomultimerization region spans residues 18-26 (VIKILYQSN). Over residues 25–34 (SNPYPNDSGT) the composition is skewed to polar residues. 2 disordered regions span residues 25 to 48 (SNPY…WRAR) and 66 to 103 (GLQE…TATT). Positions 34 to 50 (TRQARKNRRRRWRARQR) match the Nuclear localization signal and RNA-binding (RRE) motif. Basic residues predominate over residues 36 to 48 (QARKNRRRRWRAR). The Nuclear export signal and binding to XPO1 motif lies at 73 to 84 (LPLPPLDRLSLN). The residue at position 92 (serine 92) is a Phosphoserine; by host.

It belongs to the HIV-1 REV protein family. Homomultimer; when bound to the RRE. Multimeric assembly is essential for activity and may involve XPO1. Binds to human KPNB1, XPO1, TNPO1, RANBP5 and IPO7. Interacts with the viral Integrase. Interacts with human KHDRBS1. Interacts with human NAP1; this interaction decreases Rev multimerization and stimulates its activity. Interacts with human DEAD-box helicases DDX3 and DDX24; these interactions may serve for viral RNA export to the cytoplasm and packaging, respectively. Interacts with human PSIP1; this interaction may inhibit HIV-1 DNA integration by promoting dissociation of the Integrase-LEDGF/p75 complex. In terms of processing, asymmetrically arginine dimethylated at one site by host PRMT6. Methylation impairs the RNA-binding activity and export of viral RNA from the nucleus to the cytoplasm. Post-translationally, phosphorylated by protein kinase CK2. Presence of, and maybe binding to the N-terminus of the regulatory beta subunit of CK2 is necessary for CK2-mediated Rev's phosphorylation.

Its subcellular location is the host nucleus. It localises to the host nucleolus. The protein localises to the host cytoplasm. Escorts unspliced or incompletely spliced viral pre-mRNAs (late transcripts) out of the nucleus of infected cells. These pre-mRNAs carry a recognition sequence called Rev responsive element (RRE) located in the env gene, that is not present in fully spliced viral mRNAs (early transcripts). This function is essential since most viral proteins are translated from unspliced or partially spliced pre-mRNAs which cannot exit the nucleus by the pathway used by fully processed cellular mRNAs. Rev itself is translated from a fully spliced mRNA that readily exits the nucleus. Rev's nuclear localization signal (NLS) binds directly to KPNB1/Importin beta-1 without previous binding to KPNA1/Importin alpha-1. KPNB1 binds to the GDP bound form of RAN (Ran-GDP) and targets Rev to the nucleus. In the nucleus, the conversion from Ran-GDP to Ran-GTP dissociates Rev from KPNB1 and allows Rev's binding to the RRE in viral pre-mRNAs. Rev multimerization on the RRE via cooperative assembly exposes its nuclear export signal (NES) to the surface. Rev can then form a complex with XPO1/CRM1 and Ran-GTP, leading to nuclear export of the complex. Conversion from Ran-GTP to Ran-GDP mediates dissociation of the Rev/RRE/XPO1/RAN complex, so that Rev can return to the nucleus for a subsequent round of export. Beside KPNB1, also seems to interact with TNPO1/Transportin-1, RANBP5/IPO5 and IPO7/RANBP7 for nuclear import. The nucleoporin-like HRB/RIP is an essential cofactor that probably indirectly interacts with Rev to release HIV RNAs from the perinuclear region to the cytoplasm. In Pan troglodytes (Chimpanzee), this protein is Protein Rev.